Here is a 619-residue protein sequence, read N- to C-terminus: Dihydroxy-acid dehydratase (619 aa).

Mg(2+) is bound at residue Asp81. Cys122 contacts [2Fe-2S] cluster. The Mg(2+) site is built by Asp123 and Lys124. At Lys124 the chain carries N6-carboxylysine. Cys195 serves as a coordination point for [2Fe-2S] cluster. A Mg(2+)-binding site is contributed by Glu494. The Proton acceptor role is filled by Ser520.

The protein belongs to the IlvD/Edd family. Homodimer. Requires [2Fe-2S] cluster as cofactor. Mg(2+) is required as a cofactor.

The catalysed reaction is (2R)-2,3-dihydroxy-3-methylbutanoate = 3-methyl-2-oxobutanoate + H2O. The enzyme catalyses (2R,3R)-2,3-dihydroxy-3-methylpentanoate = (S)-3-methyl-2-oxopentanoate + H2O. It participates in amino-acid biosynthesis; L-isoleucine biosynthesis; L-isoleucine from 2-oxobutanoate: step 3/4. The protein operates within amino-acid biosynthesis; L-valine biosynthesis; L-valine from pyruvate: step 3/4. In terms of biological role, functions in the biosynthesis of branched-chain amino acids. Catalyzes the dehydration of (2R,3R)-2,3-dihydroxy-3-methylpentanoate (2,3-dihydroxy-3-methylvalerate) into 2-oxo-3-methylpentanoate (2-oxo-3-methylvalerate) and of (2R)-2,3-dihydroxy-3-methylbutanoate (2,3-dihydroxyisovalerate) into 2-oxo-3-methylbutanoate (2-oxoisovalerate), the penultimate precursor to L-isoleucine and L-valine, respectively. This Shewanella denitrificans (strain OS217 / ATCC BAA-1090 / DSM 15013) protein is Dihydroxy-acid dehydratase.